The following is a 595-amino-acid chain: NADH-quinone oxidoreductase subunit C/D (595 aa).

Residues 1-185 are NADH dehydrogenase I subunit C; that stretch reads MTDLTAQAAC…DPFELTKAKQ (185 aa). The NADH dehydrogenase I subunit D stretch occupies residues 209–595; it reads DFMFLNLGPN…IDFVMSDVDR (387 aa).

It in the N-terminal section; belongs to the complex I 30 kDa subunit family. The protein in the C-terminal section; belongs to the complex I 49 kDa subunit family. In terms of assembly, NDH-1 is composed of 13 different subunits. Subunits NuoB, CD, E, F, and G constitute the peripheral sector of the complex.

It is found in the cell inner membrane. The enzyme catalyses a quinone + NADH + 5 H(+)(in) = a quinol + NAD(+) + 4 H(+)(out). In terms of biological role, NDH-1 shuttles electrons from NADH, via FMN and iron-sulfur (Fe-S) centers, to quinones in the respiratory chain. The immediate electron acceptor for the enzyme in this species is believed to be ubiquinone. Couples the redox reaction to proton translocation (for every two electrons transferred, four hydrogen ions are translocated across the cytoplasmic membrane), and thus conserves the redox energy in a proton gradient. This is NADH-quinone oxidoreductase subunit C/D from Enterobacter sp. (strain 638).